A 538-amino-acid chain; its full sequence is Bifunctional purine biosynthesis protein PurH (538 aa).

Positions 8 to 158 (FPIPDLHRVR…KNHVYTGVIT (151 aa)) constitute an MGS-like domain.

It belongs to the PurH family.

The catalysed reaction is (6R)-10-formyltetrahydrofolate + 5-amino-1-(5-phospho-beta-D-ribosyl)imidazole-4-carboxamide = 5-formamido-1-(5-phospho-D-ribosyl)imidazole-4-carboxamide + (6S)-5,6,7,8-tetrahydrofolate. It catalyses the reaction IMP + H2O = 5-formamido-1-(5-phospho-D-ribosyl)imidazole-4-carboxamide. The protein operates within purine metabolism; IMP biosynthesis via de novo pathway; 5-formamido-1-(5-phospho-D-ribosyl)imidazole-4-carboxamide from 5-amino-1-(5-phospho-D-ribosyl)imidazole-4-carboxamide (10-formyl THF route): step 1/1. It participates in purine metabolism; IMP biosynthesis via de novo pathway; IMP from 5-formamido-1-(5-phospho-D-ribosyl)imidazole-4-carboxamide: step 1/1. The polypeptide is Bifunctional purine biosynthesis protein PurH (Bartonella henselae (strain ATCC 49882 / DSM 28221 / CCUG 30454 / Houston 1) (Rochalimaea henselae)).